Consider the following 307-residue polypeptide: Transcription factor MYB78 (307 aa).

HTH myb-type domains follow at residues 23 to 79 (EMDV…RPDV) and 80 to 130 (RRGN…QKHA). 2 DNA-binding regions (H-T-H motif) span residues 51-75 (WNSL…LNYL) and 103-126 (WSKI…RTRV).

It localises to the nucleus. In Arabidopsis thaliana (Mouse-ear cress), this protein is Transcription factor MYB78.